Consider the following 473-residue polypeptide: Phosphoglucosamine mutase (473 aa).

Ser-102 acts as the Phosphoserine intermediate in catalysis. Mg(2+)-binding residues include Ser-102, Asp-248, Asp-250, and Asp-252. Ser-102 is modified (phosphoserine).

It belongs to the phosphohexose mutase family. Mg(2+) serves as cofactor. In terms of processing, activated by phosphorylation.

The catalysed reaction is alpha-D-glucosamine 1-phosphate = D-glucosamine 6-phosphate. In terms of biological role, catalyzes the conversion of glucosamine-6-phosphate to glucosamine-1-phosphate. The sequence is that of Phosphoglucosamine mutase from Rhodospirillum centenum (strain ATCC 51521 / SW).